The following is a 265-amino-acid chain: Hydroxyethylthiazole kinase (265 aa).

Residue Met-41 participates in substrate binding. Positions 117 and 163 each coordinate ATP. Gly-190 lines the substrate pocket.

The protein belongs to the Thz kinase family. The cofactor is Mg(2+).

The enzyme catalyses 5-(2-hydroxyethyl)-4-methylthiazole + ATP = 4-methyl-5-(2-phosphooxyethyl)-thiazole + ADP + H(+). It functions in the pathway cofactor biosynthesis; thiamine diphosphate biosynthesis; 4-methyl-5-(2-phosphoethyl)-thiazole from 5-(2-hydroxyethyl)-4-methylthiazole: step 1/1. Its function is as follows. Catalyzes the phosphorylation of the hydroxyl group of 4-methyl-5-beta-hydroxyethylthiazole (THZ). In Pediococcus pentosaceus (strain ATCC 25745 / CCUG 21536 / LMG 10740 / 183-1w), this protein is Hydroxyethylthiazole kinase.